A 209-amino-acid polypeptide reads, in one-letter code: Ribosomal RNA small subunit methyltransferase G (209 aa).

Residues G75, L80, 126–127, and R141 each bind S-adenosyl-L-methionine; that span reads VE.

It belongs to the methyltransferase superfamily. RNA methyltransferase RsmG family.

It localises to the cytoplasm. The enzyme catalyses guanosine(527) in 16S rRNA + S-adenosyl-L-methionine = N(7)-methylguanosine(527) in 16S rRNA + S-adenosyl-L-homocysteine. Functionally, specifically methylates the N7 position of guanine in position 527 of 16S rRNA. This is Ribosomal RNA small subunit methyltransferase G from Colwellia psychrerythraea (strain 34H / ATCC BAA-681) (Vibrio psychroerythus).